The primary structure comprises 254 residues: tRNA (guanine-N(1)-)-methyltransferase (254 aa).

S-adenosyl-L-methionine is bound by residues G113 and 133-138 (LGDFVL).

This sequence belongs to the RNA methyltransferase TrmD family. In terms of assembly, homodimer.

The protein resides in the cytoplasm. It catalyses the reaction guanosine(37) in tRNA + S-adenosyl-L-methionine = N(1)-methylguanosine(37) in tRNA + S-adenosyl-L-homocysteine + H(+). Its function is as follows. Specifically methylates guanosine-37 in various tRNAs. The polypeptide is tRNA (guanine-N(1)-)-methyltransferase (Herpetosiphon aurantiacus (strain ATCC 23779 / DSM 785 / 114-95)).